Consider the following 1323-residue polypeptide: uncharacterized protein (1323 aa).

The segment covering 1–11 has biased composition (basic and acidic residues); sequence MRELQGDDSSR. Disordered regions lie at residues 1–57 and 79–112; these read MREL…SSYY and IHES…HSET. Low complexity predominate over residues 12–21; it reads KSPPSDSVVK. Serine 24 bears the Phosphoserine mark. The segment covering 27-40 has biased composition (basic and acidic residues); that stretch reads DYEHSLKSLQDERT. Composition is skewed to polar residues over residues 42-57 and 80-105; these read NYPN…SSYY and HESS…SSTI. 6 WD repeats span residues 271–314, 320–360, 364–403, 409–449, 453–494, and 502–551; these read RHST…DRAI, GHTR…FPVN, DWHN…APLH, ENIT…EEPE, TTDS…KEGP, and GHTD…LNSM. Residues 671–779 enclose the RWD domain; it reads EELSWIGQKY…SYLSGNLSVD (109 aa). Residues 879–888 are compositionally biased toward polar residues; the sequence is SNSVADSDST. The segment at 879–904 is disordered; that stretch reads SNSVADSDSTNYDDENSLNRGGTSES. The RING-type; degenerate zinc-finger motif lies at 1265–1309; sequence CTFCCLSIHGLCIVCGLCLHVMHEDCYKEWFSNGDSISQSCSSGC.

It belongs to the WD repeat WDR59 family.

May be involved in telomere capping. This is an uncharacterized protein from Schizosaccharomyces pombe (strain 972 / ATCC 24843) (Fission yeast).